Consider the following 257-residue polypeptide: 5-oxoprolinase subunit A (257 aa).

The protein belongs to the LamB/PxpA family. Forms a complex composed of PxpA, PxpB and PxpC.

It carries out the reaction 5-oxo-L-proline + ATP + 2 H2O = L-glutamate + ADP + phosphate + H(+). Its function is as follows. Catalyzes the cleavage of 5-oxoproline to form L-glutamate coupled to the hydrolysis of ATP to ADP and inorganic phosphate. This Oceanobacillus iheyensis (strain DSM 14371 / CIP 107618 / JCM 11309 / KCTC 3954 / HTE831) protein is 5-oxoprolinase subunit A.